The sequence spans 5082 residues: Malformin synthetase mlfA (5082 aa).

Positions 225–616 (ERHAANRPHS…CGRADTQVKL (392 aa)) are adenylation 1. The 74-residue stretch at 749-822 (SRLEQKIQLA…EAASLAEVQE (74 aa)) folds into the Carrier 1 domain. S783 is subject to O-(pantetheine 4'-phosphoryl)serine. Positions 860–1291 (ENVFPCTTMQ…ALNTLSLLQA (432 aa)) are condensation 1. Residues 1319–1708 (DRWVTRQPEG…GRKDTQVKLR (390 aa)) form an adenylation 2 region. The 78-residue stretch at 1846–1923 (TPTLELERTL…QLAAEVGEPA (78 aa)) folds into the Carrier 2 domain. S1883 carries the O-(pantetheine 4'-phosphoryl)serine modification. Disordered stretches follow at residues 1924–1953 (GQSA…DGVD) and 1986–2012 (GGSS…KKNA). 2 stretches are compositionally biased toward low complexity: residues 1926–1950 (SASS…STND) and 1988–2005 (SSSN…SSSS). The tract at residues 2058–2473 (EDIYPATALQ…AVSCSDKETL (416 aa)) is condensation 2. The adenylation 3 stretch occupies residues 2496-2888 (RRTPHAPAVC…IGRRDGQLKL (393 aa)). The Carrier 3 domain occupies 3024 to 3100 (RPVTSQEHEM…QLICHLNTIR (77 aa)). S3061 carries the post-translational modification O-(pantetheine 4'-phosphoryl)serine. Condensation stretches follow at residues 3117–3582 (WVAL…TYDQ) and 3603–4022 (NIYP…EHLV). The segment at 4047 to 4426 (HNSRQAVFDD…VGRKDNQIKF (380 aa)) is adenylation 4. Residues 4560–4636 (MPSTAAERKM…DLSDQAKSLI (77 aa)) enclose the Carrier 4 domain. S4597 carries the O-(pantetheine 4'-phosphoryl)serine modification. The segment at 4673–5000 (DVLPTTSFQR…LQTIVQHQNN (328 aa)) is condensation 5.

The protein belongs to the NRP synthetase family.

It functions in the pathway secondary metabolite biosynthesis. Its function is as follows. Nonribosomal peptide synthetase; part of the gene cluster that mediates the biosynthesis of malformins, cyclic pentapeptides with a disulfide bond between 2 consecutive cysteins, that show potential anti-tumor as well as antimalarial and antitrypanosomal properties. The nonribosomal peptide synthetase mlfA is responsible of the formation of the cyclic pentapeptide. The malformin biosynthesis clusters in malformin-producing fungi also contain enzymes involved in the formation of the disulfide bond between the two consecutive cysteins within malformins, in addition to additional tailoring enzymes such as methyltransferases or oxidoreductases. They are also composed of up to 4 major facilitator superfamily transporters, and transcription factors probably involved in the regulation of the expression of those clusters. In Aspergillus luchuensis (strain CBS 106.47), this protein is Malformin synthetase mlfA.